The chain runs to 274 residues: MRDPDALLVRAGVRGDPERDQHFLIDDRVLDRLPGYLPDSADTDHVLEIGGGTGALTDRLLDVADRVTVIERDPGLATFLTDEFADEIEAGSLTVIEGDALEVPLPDFTASVSNLPYGVSSEIAFRLLPEKRPLVLMFQQEFAERMAAEPGTDEYGRLSVTAGHYADVEVVEPVPKEAFSPPPAVESAVVRTTPREPPYEVPDDELFMRLVRAVFTQRRKTMRNAVRNTTHISGIEDAEAVVEAAGEDLMSKRAGNVPPEAFARLAAIAAEVDG.

The S-adenosyl-L-methionine site is built by His-22, Leu-24, Gly-50, Glu-71, Asp-99, and Asn-114.

This sequence belongs to the class I-like SAM-binding methyltransferase superfamily. rRNA adenine N(6)-methyltransferase family. RsmA subfamily.

The protein localises to the cytoplasm. Functionally, specifically dimethylates two adjacent adenosines in the loop of a conserved hairpin near the 3'-end of 16S rRNA in the 30S particle. May play a critical role in biogenesis of 30S subunits. This chain is Probable ribosomal RNA small subunit methyltransferase A, found in Natronomonas pharaonis (strain ATCC 35678 / DSM 2160 / CIP 103997 / JCM 8858 / NBRC 14720 / NCIMB 2260 / Gabara) (Halobacterium pharaonis).